An 878-amino-acid polypeptide reads, in one-letter code: Leucine--tRNA ligase (878 aa).

A 'HIGH' region motif is present at residues 56-66; that stretch reads PYPSGKLHMGH. The short motif at 630-634 is the 'KMSKS' region element; it reads KMSKS. Lys633 lines the ATP pocket.

Belongs to the class-I aminoacyl-tRNA synthetase family.

It is found in the cytoplasm. The enzyme catalyses tRNA(Leu) + L-leucine + ATP = L-leucyl-tRNA(Leu) + AMP + diphosphate. This Prochlorococcus marinus (strain MIT 9303) protein is Leucine--tRNA ligase.